We begin with the raw amino-acid sequence, 341 residues long: MRRLSDRLRGMTGKGWSAWVRLCVLSTQVGLAAEPALARLAGVWENATRIVAIAPTADAMRFSLMLVHKPYYAYVYERVAVFSLSSLSDARADVLPPPAAQKAERVDLVLSFEGRVRVQPLVLCRWGDALFCSFFQRVSYGTRSGSVSSEQIPVRTDDPLFGFWIEEGSAEALRAYSSQAPGELNAFFFTEANFYRFRYWRDDALAFAAQRAYFTADDGVTYEIPQYVQRGAAVYSCTTGRSRVVRNFQTGTYEVRTSSDGSKRLMLRRRGAGPGSYAVGAVYPRQGFLDESALALRVDGQFLAIGEPFLRKSAVHDVTAFIDAHNARKRAPRAPLLVPDF.

This is an uncharacterized protein from Treponema pallidum (strain Nichols).